Reading from the N-terminus, the 336-residue chain is N-acetyl-gamma-glutamyl-phosphate reductase (336 aa).

Residue cysteine 156 is part of the active site.

This sequence belongs to the NAGSA dehydrogenase family. Type 1 subfamily.

It localises to the cytoplasm. It carries out the reaction N-acetyl-L-glutamate 5-semialdehyde + phosphate + NADP(+) = N-acetyl-L-glutamyl 5-phosphate + NADPH + H(+). It functions in the pathway amino-acid biosynthesis; L-arginine biosynthesis; N(2)-acetyl-L-ornithine from L-glutamate: step 3/4. Functionally, catalyzes the NADPH-dependent reduction of N-acetyl-5-glutamyl phosphate to yield N-acetyl-L-glutamate 5-semialdehyde. The polypeptide is N-acetyl-gamma-glutamyl-phosphate reductase (Moritella abyssi).